Consider the following 455-residue polypeptide: Probable galactarate/D-glucarate transporter GudP (455 aa).

12 consecutive transmembrane segments (helical) span residues 19–39, 59–79, 87–107, 108–128, 153–173, 177–197, 253–273, 289–309, 320–340, 348–368, 386–406, and 414–434; these read WFIV…RATL, YVFS…GWLL, IIAL…AIGF, FSAG…GLSE, AFFN…MGWL, FGWH…AVIW, IGVY…LTWF, GFVA…GGIV, LTFA…SMIV, WLVV…ALGW, LFNT…GYIV, and GALV…LLLV.

This sequence belongs to the major facilitator superfamily. Phthalate permease family.

It localises to the cell membrane. It carries out the reaction galactarate(in) + H(+)(in) = galactarate(out) + H(+)(out). The enzyme catalyses D-glucarate(in) + H(+)(in) = D-glucarate(out) + H(+)(out). Its function is as follows. Probably involved in the uptake of galactarate and/or D-glucarate. The sequence is that of Probable galactarate/D-glucarate transporter GudP from Bacillus subtilis (strain 168).